We begin with the raw amino-acid sequence, 49 residues long: Putative metallothionein MT1DP (49 aa).

A beta region spans residues 1–29 (MDLSCSCATGGSCTCASSCKCKEYKCTSC). Residues cysteine 5, cysteine 7, cysteine 13, cysteine 15, cysteine 19, cysteine 21, cysteine 26, cysteine 29, cysteine 33, cysteine 34, cysteine 36, cysteine 37, cysteine 41, cysteine 44, and cysteine 48 each contribute to the a divalent metal cation site. The alpha stretch occupies residues 30-49 (KKNCCSCCPMGCAKCAQGCT).

Belongs to the metallothionein superfamily. Type 1 family.

Functionally, metallothioneins have a high content of cysteine residues that bind various heavy metals. This chain is Putative metallothionein MT1DP (MT1DP), found in Homo sapiens (Human).